The sequence spans 484 residues: Pyruvate kinase (484 aa).

A substrate-binding site is contributed by arginine 33. Residues asparagine 35, serine 37, aspartate 67, and threonine 68 each contribute to the K(+) site. ATP is bound at residue 35–38 (NFSH). ATP contacts are provided by arginine 74 and lysine 155. Position 221 (glutamate 221) interacts with Mg(2+). Residues glycine 244, aspartate 245, and threonine 277 each coordinate substrate. Residue aspartate 245 coordinates Mg(2+).

The protein belongs to the pyruvate kinase family. In terms of assembly, homotetramer. Requires Mg(2+) as cofactor. K(+) is required as a cofactor.

It catalyses the reaction pyruvate + ATP = phosphoenolpyruvate + ADP + H(+). It functions in the pathway carbohydrate degradation; glycolysis; pyruvate from D-glyceraldehyde 3-phosphate: step 5/5. This is Pyruvate kinase (pyk) from Chlamydia pneumoniae (Chlamydophila pneumoniae).